Consider the following 99-residue polypeptide: NADH-ubiquinone oxidoreductase chain 2 (99 aa).

2 consecutive transmembrane segments (helical) span residues 22–42 (FLTF…IQII) and 65–85 (VMIS…SIFI).

It belongs to the complex I subunit 2 family.

It is found in the mitochondrion inner membrane. It carries out the reaction a ubiquinone + NADH + 5 H(+)(in) = a ubiquinol + NAD(+) + 4 H(+)(out). Core subunit of the mitochondrial membrane respiratory chain NADH dehydrogenase (Complex I) that is believed to belong to the minimal assembly required for catalysis. Complex I functions in the transfer of electrons from NADH to the respiratory chain. The immediate electron acceptor for the enzyme is believed to be ubiquinone. This is NADH-ubiquinone oxidoreductase chain 2 (ND2) from Cyanidium caldarium (Red alga).